The chain runs to 145 residues: UPF0102 protein BAV3162 (145 aa).

The protein belongs to the UPF0102 family.

The protein is UPF0102 protein BAV3162 of Bordetella avium (strain 197N).